The chain runs to 423 residues: COP9 signalosome complex subunit 3 (423 aa).

The 169-residue stretch at 197–365 (NFERAMYFYE…GMVCFHDSPE (169 aa)) folds into the PCI domain. Over residues 401-410 (PQFVQKSMGS) the composition is skewed to polar residues. Positions 401–423 (PQFVQKSMGSQEDDSGSKPSSYS) are disordered.

This sequence belongs to the CSN3 family. Component of the CSN complex, probably composed of cops1, cops2, cops3, cops4, cops5, cops6, cops7, cops8 and cops9.

It localises to the cytoplasm. The protein resides in the nucleus. In terms of biological role, component of the COP9 signalosome complex (CSN), a complex involved in various cellular and developmental processes. The CSN complex is an essential regulator of the ubiquitin (Ubl) conjugation pathway by mediating the deneddylation of the cullin subunits of E3 ligase complexes, leading to modify the Ubl ligase activity. This Xenopus laevis (African clawed frog) protein is COP9 signalosome complex subunit 3 (cops3).